Here is a 204-residue protein sequence, read N- to C-terminus: Endothelin-3 (204 aa).

The N-terminal stretch at 1-17 (MELRLWFLFGLTVTSAA) is a signal peptide. Positions 18-71 (GPVPRPQPGDAGRSGVPRAPSATKETMAMVATRGPSPRSSGQEQEPGPFGELAA) are disordered. The propeptide occupies 18–80 (GPVPRPQPGD…AKGGPVRYRA (63 aa)). Intrachain disulfides connect cysteine 83–cysteine 97 and cysteine 85–cysteine 93. Residues 104–204 (INTPERTVPY…KSRTDKARRL (101 aa)) constitute a propeptide that is removed on maturation. Residues 115-140 (LSNHRGSVRGRRSAGPSPQSSQPSRG) are disordered. Positions 127–140 (SAGPSPQSSQPSRG) are enriched in low complexity. The interval 144-158 (CACAESQDRACVYFC) is endothelin-like. Residues 166-204 (GASRTPETPDKEAGKPAGRATGGLHPRRLKSRTDKARRL) are disordered.

It belongs to the endothelin/sarafotoxin family.

The protein resides in the secreted. Functionally, endothelins are endothelium-derived vasoconstrictor peptides. This is Endothelin-3 (EDN3) from Sus scrofa (Pig).